A 343-amino-acid chain; its full sequence is S-adenosylmethionine:tRNA ribosyltransferase-isomerase (343 aa).

This sequence belongs to the QueA family. In terms of assembly, monomer.

It localises to the cytoplasm. It carries out the reaction 7-aminomethyl-7-carbaguanosine(34) in tRNA + S-adenosyl-L-methionine = epoxyqueuosine(34) in tRNA + adenine + L-methionine + 2 H(+). The protein operates within tRNA modification; tRNA-queuosine biosynthesis. Transfers and isomerizes the ribose moiety from AdoMet to the 7-aminomethyl group of 7-deazaguanine (preQ1-tRNA) to give epoxyqueuosine (oQ-tRNA). This chain is S-adenosylmethionine:tRNA ribosyltransferase-isomerase, found in Geobacter sulfurreducens (strain ATCC 51573 / DSM 12127 / PCA).